Reading from the N-terminus, the 146-residue chain is Large ribosomal subunit protein bL21 (146 aa).

The segment at 96-146 (KKKTRRKMGHRQELTRVMVKSISITNSTPKTSSKTEVKKKSTSPKASNPEN) is disordered.

This sequence belongs to the bacterial ribosomal protein bL21 family. Part of the 50S ribosomal subunit. Contacts protein L20.

Functionally, this protein binds to 23S rRNA in the presence of protein L20. The sequence is that of Large ribosomal subunit protein bL21 from Prochlorococcus marinus subsp. pastoris (strain CCMP1986 / NIES-2087 / MED4).